The following is a 100-amino-acid chain: UPF0213 protein YhbQ (100 aa).

The region spanning 2–77 (TPWYLYLIRT…KQLTKRQKER (76 aa)) is the GIY-YIG domain.

Belongs to the UPF0213 family.

This chain is UPF0213 protein YhbQ, found in Salmonella arizonae (strain ATCC BAA-731 / CDC346-86 / RSK2980).